A 267-amino-acid chain; its full sequence is Large ribosomal subunit protein bL9m (267 aa).

The N-terminal 52 residues, M1–G52, are a transit peptide targeting the mitochondrion.

The protein belongs to the bacterial ribosomal protein bL9 family. Component of the mitochondrial ribosome large subunit (39S) which comprises a 16S rRNA and about 50 distinct proteins.

The protein resides in the mitochondrion. The sequence is that of Large ribosomal subunit protein bL9m (MRPL9) from Papio anubis (Olive baboon).